A 292-amino-acid polypeptide reads, in one-letter code: MFNRVVLFLLTNFAVLILAGIVMSVLGVNPTQMSGLLVMAAIFGFGGSFISLLLSKFMAKRSTGAQVITEPRTQTERWLVDTVRRQAQAAGIGMPEVAIYDGPEINAFATGANRNNALVAVSTGLLQHMREDEAEAVLGHEIAHIANGDMVTMALLQGVLNTFVIVLARVVGGIIDSALSGNRDSGRGFAYYIIVFVLEMVFGLFATMIAMWFSRRREFRADAGGAQLAGRNKMIAALERLSLNHGQNTLPSQVQAFGISGGVGEGLRRLFLSHPPLTERIAALRASNGTAM.

The next 2 helical transmembrane spans lie at 5–25 (VVLF…VMSV) and 35–55 (GLLV…LLLS). Residue His-140 coordinates Zn(2+). Glu-141 is a catalytic residue. Zn(2+) is bound at residue His-144. The next 2 helical transmembrane spans lie at 155-175 (LLQG…GGII) and 193-213 (IIVF…AMWF). Residue Glu-218 participates in Zn(2+) binding.

The protein belongs to the peptidase M48B family. Zn(2+) is required as a cofactor.

The protein localises to the cell inner membrane. The polypeptide is Protease HtpX (Xanthomonas campestris pv. campestris (strain 8004)).